The primary structure comprises 123 residues: Protein Wnt-7b (123 aa).

Residue Ser-1 is the site of O-palmitoleoyl serine; by PORCN attachment. The segment at 33–61 (VEAVRATRLRQPTFLKIKKPRTYRKPMVT) is disordered linker. Cys-89 and Cys-104 form a disulfide bridge. N-linked (GlcNAc...) asparagine glycosylation is present at Asn-90.

Belongs to the Wnt family. In terms of processing, palmitoleoylation is required for efficient binding to frizzled receptors. Depalmitoleoylation leads to Wnt signaling pathway inhibition.

It is found in the secreted. The protein localises to the extracellular space. Its subcellular location is the extracellular matrix. Ligand for members of the frizzled family of seven transmembrane receptors that functions in the canonical Wnt/beta-catenin signaling pathway. Required for normal fusion of the chorion and the allantois during placenta development. Required for central nervous system (CNS) angiogenesis and blood-brain barrier regulation. The chain is Protein Wnt-7b (WNT-7B) from Alopias vulpinus (Common thresher shark).